We begin with the raw amino-acid sequence, 198 residues long: T-cell surface glycoprotein CD3 epsilon chain (198 aa).

A signal peptide spans 1 to 21; that stretch reads MRAGTLWRVLALWLLSVAAWG. Over 22 to 120 the chain is Extracellular; it reads QEDDDHADDY…EACMEVDLTT (99 aa). Residues 28–106 enclose the Ig-like domain; sequence ADDYTQKLFT…KENEHILYLK (79 aa). Cys49 and Cys90 are joined by a disulfide. Residues 121 to 141 traverse the membrane as a helical segment; sequence VASIVVADVCVTLGLLLLVYY. At 142-198 the chain is on the cytoplasmic side; that stretch reads WSKNRKAKCKPVTRGAGAGGRPRGQNKERPPPVPNPDYEPIRKGQRDLYSGLNQRGI. The tract at residues 153-198 is disordered; it reads VTRGAGAGGRPRGQNKERPPPVPNPDYEPIRKGQRDLYSGLNQRGI. The interval 166–183 is NUMB-binding region; it reads QNKERPPPVPNPDYEPIR. One can recognise an ITAM domain in the interval 169-196; the sequence is ERPPPVPNPDYEPIRKGQRDLYSGLNQR. Positions 170-177 are proline-rich sequence; it reads RPPPVPNP. Residues Tyr179 and Tyr190 each carry the phosphotyrosine modification.

As to quaternary structure, the TCR-CD3 complex is composed of a CD3D/CD3E and a CD3G/CD3E heterodimers that preferentially associate with TCRalpha and TCRbeta, respectively, to form TCRalpha/CD3E/CD3G and TCRbeta/CD3G/CD3E trimers. In turn, the hexamer interacts with CD3Z homodimer to form the TCR-CD3 complex. Alternatively, TCRalpha and TCRbeta can be replaced by TCRgamma and TCRdelta. Interacts with CD6. Interacts (via Proline-rich sequence) with NCK1; the interaction is ligand dependent but independent of tyrosine kinase activation. Phosphorylated on Tyr residues after T-cell receptor triggering by LCK in association with CD4/CD8.

The protein resides in the cell membrane. Part of the TCR-CD3 complex present on T-lymphocyte cell surface that plays an essential role in adaptive immune response. When antigen presenting cells (APCs) activate T-cell receptor (TCR), TCR-mediated signals are transmitted across the cell membrane by the CD3 chains CD3D, CD3E, CD3G and CD3Z. All CD3 chains contain immunoreceptor tyrosine-based activation motifs (ITAMs) in their cytoplasmic domain. Upon TCR engagement, these motifs become phosphorylated by Src family protein tyrosine kinases LCK and FYN, resulting in the activation of downstream signaling pathways. In addition of this role of signal transduction in T-cell activation, CD3E plays an essential role in correct T-cell development. Also participates in internalization and cell surface down-regulation of TCR-CD3 complexes via endocytosis sequences present in CD3E cytosolic region. In addition to its role as a TCR coreceptor, it serves as a receptor for ITPRIPL1. Ligand recognition inhibits T-cell activation by promoting interaction with NCK1, which prevents CD3E-ZAP70 interaction and blocks the ERK-NFkB signaling cascade and calcium influx. This is T-cell surface glycoprotein CD3 epsilon chain (CD3E) from Oryctolagus cuniculus (Rabbit).